A 257-amino-acid chain; its full sequence is UPF0246 protein YaaA (257 aa).

Belongs to the UPF0246 family.

This chain is UPF0246 protein YaaA, found in Salmonella choleraesuis (strain SC-B67).